A 37-amino-acid chain; its full sequence is Photosystem I reaction center subunit IX (37 aa).

The chain crosses the membrane as a helical span at residues 4–24; sequence FLSSAPVLLTAMMVFTAGLLI.

The protein belongs to the PsaJ family.

It is found in the cellular thylakoid membrane. In terms of biological role, may help in the organization of the PsaE and PsaF subunits. The chain is Photosystem I reaction center subunit IX from Picosynechococcus sp. (strain ATCC 27264 / PCC 7002 / PR-6) (Agmenellum quadruplicatum).